A 214-amino-acid polypeptide reads, in one-letter code: uncharacterized protein (214 aa).

5 helical membrane passes run 33–53 (VILF…ILVV), 104–124 (ILGI…SYVL), 132–152 (FIYL…LSAS), 153–173 (GGVL…FGTK), and 186–206 (LLIL…TITF).

It localises to the cell membrane. This is an uncharacterized protein from Methanocaldococcus jannaschii (strain ATCC 43067 / DSM 2661 / JAL-1 / JCM 10045 / NBRC 100440) (Methanococcus jannaschii).